Reading from the N-terminus, the 342-residue chain is N-acetyl-gamma-glutamyl-phosphate reductase (342 aa).

Cysteine 149 is a catalytic residue.

Belongs to the NAGSA dehydrogenase family. Type 1 subfamily.

The protein resides in the cytoplasm. It catalyses the reaction N-acetyl-L-glutamate 5-semialdehyde + phosphate + NADP(+) = N-acetyl-L-glutamyl 5-phosphate + NADPH + H(+). The protein operates within amino-acid biosynthesis; L-arginine biosynthesis; N(2)-acetyl-L-ornithine from L-glutamate: step 3/4. In terms of biological role, catalyzes the NADPH-dependent reduction of N-acetyl-5-glutamyl phosphate to yield N-acetyl-L-glutamate 5-semialdehyde. This Ruegeria pomeroyi (strain ATCC 700808 / DSM 15171 / DSS-3) (Silicibacter pomeroyi) protein is N-acetyl-gamma-glutamyl-phosphate reductase.